The following is a 334-amino-acid chain: CRISPR-associated protein Cas1 3 (334 aa).

The Mn(2+) site is built by Glu165, His230, and Glu245.

Belongs to the CRISPR-associated endonuclease Cas1 family. As to quaternary structure, homodimer, forms a heterotetramer with a Cas2 homodimer. The cofactor is Mg(2+). It depends on Mn(2+) as a cofactor.

CRISPR (clustered regularly interspaced short palindromic repeat), is an adaptive immune system that provides protection against mobile genetic elements (viruses, transposable elements and conjugative plasmids). CRISPR clusters contain spacers, sequences complementary to antecedent mobile elements, and target invading nucleic acids. CRISPR clusters are transcribed and processed into CRISPR RNA (crRNA). Acts as a dsDNA endonuclease. Involved in the integration of spacer DNA into the CRISPR cassette. In Methanobrevibacter ruminantium (strain ATCC 35063 / DSM 1093 / JCM 13430 / OCM 146 / M1) (Methanobacterium ruminantium), this protein is CRISPR-associated protein Cas1 3.